Consider the following 343-residue polypeptide: tRNA-splicing endonuclease (343 aa).

Catalysis depends on residues tyrosine 277, histidine 288, and lysine 319.

This sequence belongs to the tRNA-intron endonuclease family. Archaeal long subfamily. Homodimer.

It catalyses the reaction pretRNA = a 3'-half-tRNA molecule with a 5'-OH end + a 5'-half-tRNA molecule with a 2',3'-cyclic phosphate end + an intron with a 2',3'-cyclic phosphate and a 5'-hydroxyl terminus.. Functionally, endonuclease that removes tRNA introns. Cleaves pre-tRNA at the 5' and 3' splice sites to release the intron. The products are an intron and two tRNA half-molecules bearing 2',3' cyclic phosphate and 5'-OH termini. Recognizes a pseudosymmetric substrate in which 2 bulged loops of 3 bases are separated by a stem of 4 bp. This chain is tRNA-splicing endonuclease, found in Halobacterium salinarum (strain ATCC 29341 / DSM 671 / R1).